Consider the following 498-residue polypeptide: Pyridine nucleotide-disulfide oxidoreductase domain-containing protein 1 (498 aa).

Methionine 1 bears the N-acetylmethionine mark.

Belongs to the class-I pyridine nucleotide-disulfide oxidoreductase family. PYROXD1 subfamily. FAD serves as cofactor.

The protein resides in the nucleus. It localises to the cytoplasm. The protein localises to the myofibril. It is found in the sarcomere. Probable FAD-dependent oxidoreductase; involved in the cellular oxidative stress response. Required for normal sarcomere structure and muscle fiber integrity. The polypeptide is Pyridine nucleotide-disulfide oxidoreductase domain-containing protein 1 (Pyroxd1) (Rattus norvegicus (Rat)).